Consider the following 129-residue polypeptide: L-ectoine synthase (129 aa).

This sequence belongs to the ectoine synthase family.

The catalysed reaction is (2S)-4-acetamido-2-aminobutanoate = L-ectoine + H2O. It functions in the pathway amine and polyamine biosynthesis; ectoine biosynthesis; L-ectoine from L-aspartate 4-semialdehyde: step 3/3. In terms of biological role, catalyzes the circularization of gamma-N-acetyl-alpha,gamma-diaminobutyric acid (ADABA) to ectoine (1,4,5,6-tetrahydro-2-methyl-4-pyrimidine carboxylic acid), which is an excellent osmoprotectant. The protein is L-ectoine synthase of Marinomonas sp. (strain MWYL1).